Reading from the N-terminus, the 95-residue chain is HIG1 domain family member 1A, mitochondrial (95 aa).

The residue at position 2 (S2) is an N-acetylserine. An HIG1 domain is found at 2–93 (STNTDLSLSS…YQEFWANPKP (92 aa)). S8 is subject to Phosphoserine. Transmembrane regions (helical) follow at residues 28–48 (PFVP…LYKL) and 69–89 (GFVV…EFWA).

Associates with cytochrome c oxidase (COX, complex IV); proposed complex component. Also associates with respiratory chain supercomplexes.

The protein localises to the mitochondrion membrane. The protein resides in the mitochondrion inner membrane. Functionally, proposed subunit of cytochrome c oxidase (COX, complex IV), which is the terminal component of the mitochondrial respiratory chain that catalyzes the reduction of oxygen to water. May play a role in the assembly of respiratory supercomplexes. The protein is HIG1 domain family member 1A, mitochondrial (Higd1a) of Mus musculus (Mouse).